A 782-amino-acid chain; its full sequence is Shutoff protein (782 aa).

Residues 262–329 form a binding to host EIF4G region; sequence VMNQLLIKRA…AVLVTVELEC (68 aa). Residues 332-450 form the RRM domain; it reads RFFSDITTLR…SLWTGFDERT (119 aa). Residues tyrosine 349 and tyrosine 665 each carry the phosphotyrosine; by host modification. The interval 715-760 is disordered; it reads GGRILGESGRGRGRGLGRMGGGGGGQPRRGSRGGGGRFQGRSDRRQ. Gly residues predominate over residues 728 to 752; it reads RGLGRMGGGGGGQPRRGSRGGGGRF.

This sequence belongs to the adenoviridae shutoff protein family. In terms of assembly, monomer. Interacts with hexon protein; this interaction allows chaperoning and trimerization of hexon proteins. Interacts (via N-terminus) with host initiation factor EIF4G (via C-terminus). Interacts (via RRM domain) with viral mRNAs that contain the tripartite leader; this interaction allows ribosome shunting and expression of viral late mRNAs. Might be cleaved by the viral protease. Post-translationally, phosphorylated. Tyrosine phosphorylation enhances preferential binding to tripartite leader mRNAs and allows ribosome shunting. In terms of processing, methylated. Asymmetric dimethylation by host PRMT1 of the Arg/Gly-rich region may regulate shutoff protein binding to hexon and promote the capsid assembly in the nucleus.

The protein localises to the host cytoplasm. Functionally, protein that inhibits host translation while promoting late viral translation by ribosome shunting. Blocks host cap-dependent translation by binding to eIF4G, displacing MKNK1 from cap initiation complexes and preventing EIF4E phosphorylation. Binds to the tripartite leader sequence of viral late mRNAs and recruits host eIF4G, PABPC1/poly-A binding protein and 40S ribosomes subunits on viral mRNAs, allowing ribosome shunting and efficient translation of late viral mRNAs even though conventional translation via ribosome scanning from the cap has been shut off in the host cell. During assembly, acts as a chaperone protein that helps hexon proteins assembly into trimers. The chain is Shutoff protein from Human adenovirus A serotype 12 (HAdV-12).